Reading from the N-terminus, the 989-residue chain is MESMKQFKNNNVDLISNNDPLDKNRALIEDLWESVLREECPDDQANRLIQLKELSYSNKVEEYSPKNFKTEIVDIVNSMDLAESISAARAFSLYFQLVNILEQRVEEDRYIQSFTNQNVKKSHDNLDPFAPALARQNAPVTFKELFFRLRRLNVPPGKLEELLQEMDIRLVFTAHPTEIVRHTIRHKQTRVANLLQKIQVEKFLTIEDIKSLKIQLKEEIRLWWRTDELHQFKPSVIDEVDYALHYFQQVLFDAMPQLRGRISSALTENYPDVQMPTESFCTFGSWVGSDRDGNPSVTPEITWRTACYQRQLMLERYIKATSNLRDQLSVSMQWSQVSSSLLESLETDRVKFPEIYEARATRYRSEPYRLKLSYILEKLRLTHERNNLLSEGGWKLSLERESDNKNLELVEKLHYKSVDEFTYDLELIKNSLNSTDLTCEAVNKLLTQVHIFGFSLASLDIRQESTRHSDAIQELTNYLELPKQYDQMSEKDRIQWLNEELNTKRPLIPSEVNWNKSTEETFSVFKMVKRLQEEFGSRICHSYVISMSHSASDLLEVLLLAKEMGLIDQGSQKSTLLVVPLFETVEDLQRAPDVMEQLFQLDFYKSLLPKVGESFKPLQELMLGYSDSNKDSGFLSSNWEIHRAQIALQNLSSRNNILLRLFHGRGGSVGRGGGPAYQAILAQPSGTLKGRIKITEQGEVLASKYSLPELALYNLETVTTAVIQNSLVNNRLDATPEWNDLMTRLAETSRIQYRKLVHENPNLLTFFQEVTPIEEISKLQISSRPARRKKGAKDLSSLRAIPWVFGWTQSRFLLPSWFGVGTALSVELKSDPEQIELLRVLHQRWPFFRMLISKVEMTLSKVDLEVAKYYVDTLGSKENSKSFEEIFDVISKEYNLTKSLVLEITGKNKLLESDRDLRSSVNLRNKTIIPLGFLQVSLLRRLRDQTRQPPISEFIEDRIESKRAYSRSELLRGALLTINGIAAGMRNTG.

Residues His-175 and Lys-630 contribute to the active site.

It belongs to the PEPCase type 1 family. Mg(2+) serves as cofactor.

The enzyme catalyses oxaloacetate + phosphate = phosphoenolpyruvate + hydrogencarbonate. Its function is as follows. Forms oxaloacetate, a four-carbon dicarboxylic acid source for the tricarboxylic acid cycle. This is Phosphoenolpyruvate carboxylase from Prochlorococcus marinus subsp. pastoris (strain CCMP1986 / NIES-2087 / MED4).